Consider the following 179-residue polypeptide: Phosphopantetheine adenylyltransferase (179 aa).

Ser-23 contributes to the substrate binding site. Residues 23–24 (SF) and His-31 contribute to the ATP site. Substrate-binding residues include Lys-55, Ala-87, and Arg-101. ATP-binding positions include 102 to 104 (GIR), Glu-112, and 137 to 143 (FAHVSSS).

Belongs to the bacterial CoaD family. In terms of assembly, homohexamer. It depends on Mg(2+) as a cofactor.

Its subcellular location is the cytoplasm. It catalyses the reaction (R)-4'-phosphopantetheine + ATP + H(+) = 3'-dephospho-CoA + diphosphate. Its pathway is cofactor biosynthesis; coenzyme A biosynthesis; CoA from (R)-pantothenate: step 4/5. Functionally, reversibly transfers an adenylyl group from ATP to 4'-phosphopantetheine, yielding dephospho-CoA (dPCoA) and pyrophosphate. The polypeptide is Phosphopantetheine adenylyltransferase (Rhodopirellula baltica (strain DSM 10527 / NCIMB 13988 / SH1)).